Reading from the N-terminus, the 20-residue chain is Cupiennin-6f (20 aa).

As to expression, expressed by the venom gland.

The protein resides in the secreted. The sequence is that of Cupiennin-6f from Cupiennius salei (American wandering spider).